A 159-amino-acid polypeptide reads, in one-letter code: L-alanine exporter AlaE (159 aa).

4 helical membrane-spanning segments follow: residues 17–37, 48–68, 86–106, and 110–130; these read FAMV…VSGM, LSIP…DYLL, MVAY…AVGA, and QIIT…IVYG.

This sequence belongs to the AlaE exporter family.

Its subcellular location is the cell inner membrane. In terms of biological role, exports L-alanine. The protein is L-alanine exporter AlaE of Photobacterium profundum (strain SS9).